The following is a 368-amino-acid chain: Agmatine deiminase (368 aa).

Cysteine 357 functions as the Amidino-cysteine intermediate in the catalytic mechanism.

It belongs to the agmatine deiminase family. In terms of assembly, homodimer.

It carries out the reaction agmatine + H2O = N-carbamoylputrescine + NH4(+). Its pathway is amine and polyamine biosynthesis; putrescine biosynthesis via agmatine pathway; N-carbamoylputrescine from agmatine: step 1/1. Mediates the hydrolysis of agmatine into N-carbamoylputrescine in the arginine decarboxylase (ADC) pathway of putrescine biosynthesis, a basic polyamine. The chain is Agmatine deiminase from Pseudomonas savastanoi pv. phaseolicola (strain 1448A / Race 6) (Pseudomonas syringae pv. phaseolicola (strain 1448A / Race 6)).